Consider the following 275-residue polypeptide: Large ribosomal subunit protein uL2 (275 aa).

The interval 222–275 (GKVMNPVDHPHGGGEGRNPIGRNPSTPWGKLAMGVKTRGNKKSDRLIVKRRNKK) is disordered.

The protein belongs to the universal ribosomal protein uL2 family. Part of the 50S ribosomal subunit. Forms a bridge to the 30S subunit in the 70S ribosome.

In terms of biological role, one of the primary rRNA binding proteins. Required for association of the 30S and 50S subunits to form the 70S ribosome, for tRNA binding and peptide bond formation. It has been suggested to have peptidyltransferase activity; this is somewhat controversial. Makes several contacts with the 16S rRNA in the 70S ribosome. The sequence is that of Large ribosomal subunit protein uL2 from Desulforamulus reducens (strain ATCC BAA-1160 / DSM 100696 / MI-1) (Desulfotomaculum reducens).